The primary structure comprises 192 residues: MNWYEKLSEYFPIEEMKSKAHMEALLKERSDIYHKDEGKHHILMFAEFDSFIFVDYLYVSKDARGQGLGGKLIAKLKKKNKPILLEVEPVDEDDTDTEKRLRFYQREHFKHAQSIGYRRRSLATNEVNKMEILYWSPKTESEEEILEAMKQTYENIHTYKDEKWYGESYEKTDEVLEIIDEEKQKNIFDQLS.

The 139-residue stretch at 1 to 139 (MNWYEKLSEY…MEILYWSPKT (139 aa)) folds into the N-acetyltransferase domain.

The protein resides in the cytoplasm. The polypeptide is Putative acetyltransferase YjbC (yjbC) (Bacillus subtilis (strain 168)).